Reading from the N-terminus, the 282-residue chain is MKYIGAHVSASGGVSNAPLNAKSIGADAFALFVKNQRQWSAKPLTKSEISSFKTNLKNANISLEHILPHNSYLINLGHPDPQQRKKSIDAFLDEIYRCDLLDLKMINFHPGSHLKEIDENICLSNISSSINYILENSSGIKLVIENTAGQGSNMGFKFEHLGYLVKNSCDKNRIGVCIDTCHLFCSGYDIRSKSAYEKTMDDFGKIVGFEFLSGMHLNDSKCDLASRKDRHESLGKGCIGWSGFENIMNDKRIDEIPLILETIDNSIWADEIIALRNLIKGN.

Residues histidine 69, histidine 109, glutamate 145, aspartate 179, histidine 182, histidine 216, aspartate 229, histidine 231, and glutamate 261 each coordinate Zn(2+).

Belongs to the AP endonuclease 2 family. It depends on Zn(2+) as a cofactor.

The enzyme catalyses Endonucleolytic cleavage to 5'-phosphooligonucleotide end-products.. In terms of biological role, endonuclease IV plays a role in DNA repair. It cleaves phosphodiester bonds at apurinic or apyrimidinic (AP) sites, generating a 3'-hydroxyl group and a 5'-terminal sugar phosphate. The sequence is that of Probable endonuclease 4 from Campylobacter fetus subsp. fetus (strain 82-40).